The chain runs to 1226 residues: Integrin alpha pat-2 (1226 aa).

The signal sequence occupies residues 1 to 25; it reads MREGSFPRRIGLLLGLLGLLAGVAT. At 26-1154 the chain is on the extracellular side; sequence FNIDTKNVVV…IASEEGRDLP (1129 aa). FG-GAP repeat units lie at residues 27 to 94, 108 to 171, 178 to 233, 234 to 290, 291 to 345, 362 to 421, and 425 to 488; these read NIDT…TCRE, NGSH…NAEE, EPAR…TDRP, NTEY…MMIN, LTDE…KPQY, GKQI…GVRE, and QKIE…PESA. N-linked (GlcNAc...) asparagine glycans are attached at residues Asn-108, Asn-228, and Asn-290. Asn-608 carries N-linked (GlcNAc...) asparagine glycosylation. The Cell attachment site motif lies at 620-622; sequence RGD. N-linked (GlcNAc...) asparagine glycosylation is present at Asn-679. The segment at 709-733 is disordered; it reads SVGGDGSKSAPACSPTSDEPDSDGK. 2 N-linked (GlcNAc...) asparagine glycosylation sites follow: Asn-775 and Asn-819. Disordered regions lie at residues 898–958 and 982–1040; these read LRIT…HVYE and DYEY…ARFS. The segment covering 920 to 931 has biased composition (acidic residues); it reads REEDDESYEDET. The span at 932 to 951 shows a compositional bias: low complexity; that stretch reads TTQSQSTRHQSTQHQTHHQS. Positions 985–1005 are enriched in acidic residues; the sequence is YIPDDQEYDGDDFEEEDDEDF. The segment covering 1010-1026 has biased composition (basic residues); sequence SKRVKRNPTPKKKKKGG. Basic and acidic residues predominate over residues 1027–1040; it reads EHRGEPRSDKARFS. The helical transmembrane segment at 1155 to 1177 threads the bilayer; the sequence is WWLYLLAILIGLAILILLILLLW. The Cytoplasmic segment spans residues 1178–1226; it reads RCGFFKRNRPPTEHAELRADRQPNAQYADSQSRYTSQDQYNQGRHGQML. A disordered region spans residues 1191-1226; the sequence is HAELRADRQPNAQYADSQSRYTSQDQYNQGRHGQML. The span at 1200 to 1226 shows a compositional bias: polar residues; sequence PNAQYADSQSRYTSQDQYNQGRHGQML.

The protein belongs to the integrin alpha chain family. In terms of assembly, heterodimer of an alpha and a beta subunit. Interacts with beta subunit pat-3. Interacts with dep-1. Component of an integrin containing attachment complex, composed of at least pat-2, pat-3, pat-4, pat-6, unc-52, unc-97 and unc-112. In terms of tissue distribution, expressed in body-wall muscle cells, distal tip cells, and vulval tissue.

The protein localises to the membrane. Its function is as follows. Required for muscle development probably through the regulation of the actin-myosin cytoskeleton. Component of an integrin containing attachment complex, which is required for muscle maintenance. During the formation of neuromuscular junctions at the larval stage, negatively regulates membrane protrusion from body wall muscles, probably through lamins such as epi-1, lam-2 and unc-52. Required for distal tip cell migration and dorsal pathfinding. Required for egg-laying. May play a role in cell motility and cell-cell interactions. Plays a role in vulval development. Probably within the alpha pat-2/beta pat-3 integrin receptor complex, plays a role in the negative regulation of let-23 signaling and vulval induction. This is probably partly by restricting the mobility of the let-23 receptor on the plasma membrane of vulval cells which thereby attenuates let-23 signaling. This chain is Integrin alpha pat-2, found in Caenorhabditis elegans.